A 410-amino-acid polypeptide reads, in one-letter code: Exopolygalacturonase (410 aa).

Residues 1-22 (MACTNNAMRALFLLVLFCIVHG) form the signal peptide. Residue Asn-89 is glycosylated (N-linked (GlcNAc...) asparagine). PbH1 repeat units follow at residues 192-218 (CKDM…HMGD), 219-240 (SSGI…SIGP), 242-262 (TSKV…SIGS), 272-293 (VTDI…RIKA), and 337-377 (ASKV…TMDD). Asp-233 serves as the catalytic Proton donor. A disulfide bridge links Cys-235 with Cys-252. Asn-246 carries an N-linked (GlcNAc...) asparagine glycan. Residue His-256 is part of the active site. Asn-349 carries an N-linked (GlcNAc...) asparagine glycan. Residues Cys-364 and Cys-370 are joined by a disulfide bond. N-linked (GlcNAc...) asparagine glycosylation is present at Asn-387. The cysteines at positions 393 and 409 are disulfide-linked.

It belongs to the glycosyl hydrolase 28 family. In terms of tissue distribution, pollen.

It localises to the secreted. The protein localises to the cell wall. The catalysed reaction is [(1-&gt;4)-alpha-D-galacturonosyl](n) + H2O = alpha-D-galacturonate + [(1-&gt;4)-alpha-D-galacturonosyl](n-1). Functionally, may function in depolymerizing pectin during pollen development, germination, and tube growth. Acts as an exo-polygalacturonase. This chain is Exopolygalacturonase (PG1), found in Zea mays (Maize).